Here is a 3071-residue protein sequence, read N- to C-terminus: Intermembrane lipid transfer protein vps1301 (3071 aa).

The 114-residue stretch at 2-115 (LEGLVAGLLN…QQALKQEQLD (114 aa)) folds into the Chorein N-terminal domain. Residues 2143-2415 (HIEIFSPYII…KYSWDYPCCA (273 aa)) form the SHR-BD domain.

It belongs to the VPS13 family.

Its subcellular location is the golgi apparatus. It is found in the trans-Golgi network. Its function is as follows. Mediates the transfer of lipids between membranes at organelle contact sites. May play a role in mitochondrial lipid homeostasis, Golgi vesicle transport, reticulophagy, actin cytoskeleton organization and formation of the forespore membrane. This is Intermembrane lipid transfer protein vps1301 from Schizosaccharomyces pombe (strain 972 / ATCC 24843) (Fission yeast).